The following is a 266-amino-acid chain: Putative carbamate hydrolase RutD (266 aa).

It belongs to the AB hydrolase superfamily. Hydrolase RutD family.

It carries out the reaction carbamate + 2 H(+) = NH4(+) + CO2. Its function is as follows. Involved in pyrimidine catabolism. May facilitate the hydrolysis of carbamate, a reaction that can also occur spontaneously. The polypeptide is Putative carbamate hydrolase RutD (Escherichia coli (strain B / BL21-DE3)).